The following is a 137-amino-acid chain: Large ribosomal subunit protein uL16 (137 aa).

Positions 1 to 17 are enriched in basic residues; the sequence is MLQPKRTKFRKTHKGRN. A disordered region spans residues 1–24; it reads MLQPKRTKFRKTHKGRNRGLANTG.

It belongs to the universal ribosomal protein uL16 family. Part of the 50S ribosomal subunit.

Its function is as follows. Binds 23S rRNA and is also seen to make contacts with the A and possibly P site tRNAs. In Aeromonas salmonicida (strain A449), this protein is Large ribosomal subunit protein uL16.